Reading from the N-terminus, the 346-residue chain is Peroxidase 38 (346 aa).

A signal peptide spans 1–22; it reads MHSSLIKLGFLLLLLQVSLSHA. Pyrrolidone carboxylic acid is present on Gln-23. Disulfide bonds link Cys-33/Cys-113, Cys-66/Cys-71, Cys-119/Cys-323, and Cys-199/Cys-231. The active-site Proton acceptor is His-64. Asp-65, Val-68, Gly-70, Asp-72, and Ser-74 together coordinate Ca(2+). A glycan (N-linked (GlcNAc...) asparagine) is linked at Asn-79. Pro-161 contributes to the substrate binding site. His-192 provides a ligand contact to heme b. Thr-193 provides a ligand contact to Ca(2+). N-linked (GlcNAc...) asparagine glycosylation occurs at Asn-236. Ca(2+) contacts are provided by Asp-244, Thr-247, and Asp-252.

It belongs to the peroxidase family. Classical plant (class III) peroxidase subfamily. The cofactor is heme b. Requires Ca(2+) as cofactor.

It localises to the secreted. Its subcellular location is the vacuole. The catalysed reaction is 2 a phenolic donor + H2O2 = 2 a phenolic radical donor + 2 H2O. Functionally, removal of H(2)O(2), oxidation of toxic reductants, biosynthesis and degradation of lignin, suberization, auxin catabolism, response to environmental stresses such as wounding, pathogen attack and oxidative stress. These functions might be dependent on each isozyme/isoform in each plant tissue. The protein is Peroxidase 38 (PER38) of Arabidopsis thaliana (Mouse-ear cress).